Consider the following 398-residue polypeptide: Bone morphogenetic protein 2-B (398 aa).

The first 23 residues, 1–23 (MVAGIHSLLLLQFYQILLSGCTG), serve as a signal peptide directing secretion. The propeptide occupies 24–284 (LVPEEGKRKY…GHALHKRQKR (261 aa)). N-linked (GlcNAc...) asparagine glycans are attached at residues Asn-137, Asn-202, Asn-237, and Asn-340. Intrachain disulfides connect Cys-298–Cys-363, Cys-327–Cys-395, and Cys-331–Cys-397.

The protein belongs to the TGF-beta family. Homodimer; disulfide-linked.

It localises to the secreted. Functionally, induces cartilage and bone formation. This chain is Bone morphogenetic protein 2-B (bmp2-b), found in Xenopus laevis (African clawed frog).